A 297-amino-acid polypeptide reads, in one-letter code: Acetylglutamate kinase (297 aa).

Residues 64-65, Arg86, and Asn190 contribute to the substrate site; that span reads GG.

Belongs to the acetylglutamate kinase family. ArgB subfamily.

It is found in the cytoplasm. The enzyme catalyses N-acetyl-L-glutamate + ATP = N-acetyl-L-glutamyl 5-phosphate + ADP. The protein operates within amino-acid biosynthesis; L-arginine biosynthesis; N(2)-acetyl-L-ornithine from L-glutamate: step 2/4. Functionally, catalyzes the ATP-dependent phosphorylation of N-acetyl-L-glutamate. The chain is Acetylglutamate kinase from Solidesulfovibrio magneticus (strain ATCC 700980 / DSM 13731 / RS-1) (Desulfovibrio magneticus).